The primary structure comprises 102 residues: Inner membrane protein YaiY (102 aa).

Over 1–24 (MADFTLSKSLFSGKYRNASSTPGN) the chain is Cytoplasmic. The chain crosses the membrane as a helical span at residues 25-45 (IAYALFVLFCFWAGAQLLNLL). The Periplasmic segment spans residues 46 to 74 (VHAPGVYERLMQVQETGRPRVEIGLGVGT). A helical membrane pass occupies residues 75–95 (IFGLIPFLVGCLIFAVVALWL). Over 96–102 (HWRHRRQ) the chain is Cytoplasmic.

It is found in the cell inner membrane. This is Inner membrane protein YaiY (yaiY) from Escherichia coli O157:H7.